Consider the following 599-residue polypeptide: Elongation factor 4 (599 aa).

The 183-residue stretch at 2–184 folds into the tr-type G domain; it reads KHIRNFSIIA…RLVRDIPAPE (183 aa). GTP contacts are provided by residues 14–19 and 131–134; these read DHGKST and NKID.

It belongs to the TRAFAC class translation factor GTPase superfamily. Classic translation factor GTPase family. LepA subfamily.

Its subcellular location is the cell inner membrane. It catalyses the reaction GTP + H2O = GDP + phosphate + H(+). Required for accurate and efficient protein synthesis under certain stress conditions. May act as a fidelity factor of the translation reaction, by catalyzing a one-codon backward translocation of tRNAs on improperly translocated ribosomes. Back-translocation proceeds from a post-translocation (POST) complex to a pre-translocation (PRE) complex, thus giving elongation factor G a second chance to translocate the tRNAs correctly. Binds to ribosomes in a GTP-dependent manner. This is Elongation factor 4 from Yersinia pestis bv. Antiqua (strain Antiqua).